Reading from the N-terminus, the 155-residue chain is MRCPFCGNVDTQVKDSRPAEDHVSIRRRRFCPACGGRFTTYERVQLRDLVVIKTNGKREDFDRDKLERSIRISMQKRPVDPERIDQMISGIVRRLESMGETDIPSKKIGEIVMEALARIDTVAYVRFASVYKNFQAADDFEDFVHELRPPAPPES.

A zinc finger spans residues 3 to 34 (CPFCGNVDTQVKDSRPAEDHVSIRRRRFCPAC). Residues 49 to 139 (LVVIKTNGKR…VYKNFQAADD (91 aa)) enclose the ATP-cone domain.

This sequence belongs to the NrdR family. It depends on Zn(2+) as a cofactor.

Negatively regulates transcription of bacterial ribonucleotide reductase nrd genes and operons by binding to NrdR-boxes. This Ruegeria sp. (strain TM1040) (Silicibacter sp.) protein is Transcriptional repressor NrdR.